A 274-amino-acid chain; its full sequence is HTH-type transcriptional regulator GadX (274 aa).

Residues 145–242 (TRVCTVINNN…GMTPTEYQER (98 aa)) form the HTH araC/xylS-type domain. 2 consecutive DNA-binding regions (H-T-H motif) follow at residues 162-183 (ARIA…REEG) and 209-232 (IKRV…RNYY).

Homodimer.

Positively regulates the expression of about fifteen genes involved in acid resistance such as gadA, gadB and gadC. Depending on the conditions (growth phase and medium), can repress gadW. Negatively regulates perA expression in acidic conditions and positively regulates it in alkaline conditions. The chain is HTH-type transcriptional regulator GadX (gadX) from Escherichia coli O127:H6 (strain E2348/69 / EPEC).